Reading from the N-terminus, the 430-residue chain is Mannan endo-1,4-beta-mannosidase (430 aa).

Glu-173 functions as the Proton donor in the catalytic mechanism. Residue Glu-269 is the Nucleophile of the active site. CBM10 domains are found at residues 357-390 and 395-424; these read SCGT…CVVA and SCNW…CIAA.

It belongs to the glycosyl hydrolase 5 (cellulase A) family.

It catalyses the reaction Random hydrolysis of (1-&gt;4)-beta-D-mannosidic linkages in mannans, galactomannans and glucomannans.. Catalyzes the endo hydrolysis of beta-1,4-linked mannan, galactomannan and glucomannan. It is able to hydrolyze mannosidic linkages that are flanked by mannose or glucose. The chain is Mannan endo-1,4-beta-mannosidase from Cellvibrio japonicus (strain Ueda107) (Pseudomonas fluorescens subsp. cellulosa).